A 398-amino-acid chain; its full sequence is Enoyl-[acyl-carrier-protein] reductase [NADH] (398 aa).

Residues 48-53 (GASTGY), 74-75 (FE), 111-112 (DA), and 139-140 (LA) contribute to the NAD(+) site. Residue tyrosine 225 participates in substrate binding. The active-site Proton donor is the tyrosine 235. NAD(+)-binding positions include lysine 244 and 273–275 (VVT).

It belongs to the TER reductase family. In terms of assembly, monomer.

It catalyses the reaction a 2,3-saturated acyl-[ACP] + NAD(+) = a (2E)-enoyl-[ACP] + NADH + H(+). Its pathway is lipid metabolism; fatty acid biosynthesis. Involved in the final reduction of the elongation cycle of fatty acid synthesis (FAS II). Catalyzes the reduction of a carbon-carbon double bond in an enoyl moiety that is covalently linked to an acyl carrier protein (ACP). The polypeptide is Enoyl-[acyl-carrier-protein] reductase [NADH] (Paraburkholderia xenovorans (strain LB400)).